We begin with the raw amino-acid sequence, 440 residues long: Tubulin beta-3 chain (440 aa).

Positions 2, 60, 129, 133, 134, 135, 195, and 217 each coordinate GTP. Glu-60 is a binding site for Mg(2+). Positions 411–440 (SEYQQYQDATADEEGEYEDEEEEEPEHGYE) are disordered. Over residues 420–440 (TADEEGEYEDEEEEEPEHGYE) the composition is skewed to acidic residues.

It belongs to the tubulin family. As to quaternary structure, dimer of alpha and beta chains. A typical microtubule is a hollow water-filled tube with an outer diameter of 25 nm and an inner diameter of 15 nM. Alpha-beta heterodimers associate head-to-tail to form protofilaments running lengthwise along the microtubule wall with the beta-tubulin subunit facing the microtubule plus end conferring a structural polarity. Microtubules usually have 13 protofilaments but different protofilament numbers can be found in some organisms and specialized cells. Requires Mg(2+) as cofactor.

Its subcellular location is the cytoplasm. It is found in the cytoskeleton. Functionally, tubulin is the major constituent of microtubules, a cylinder consisting of laterally associated linear protofilaments composed of alpha- and beta-tubulin heterodimers. Microtubules grow by the addition of GTP-tubulin dimers to the microtubule end, where a stabilizing cap forms. Below the cap, tubulin dimers are in GDP-bound state, owing to GTPase activity of alpha-tubulin. This Pisum sativum (Garden pea) protein is Tubulin beta-3 chain (TUBB3).